A 347-amino-acid polypeptide reads, in one-letter code: tRNA N6-adenosine threonylcarbamoyltransferase (347 aa).

Fe cation contacts are provided by His110 and His114. Substrate contacts are provided by residues 133-137 (VVSGG), Asp168, Gly181, Asp185, and Asn277. A Fe cation-binding site is contributed by Asp305.

The protein belongs to the KAE1 / TsaD family. The cofactor is Fe(2+).

It localises to the cytoplasm. It catalyses the reaction L-threonylcarbamoyladenylate + adenosine(37) in tRNA = N(6)-L-threonylcarbamoyladenosine(37) in tRNA + AMP + H(+). Functionally, required for the formation of a threonylcarbamoyl group on adenosine at position 37 (t(6)A37) in tRNAs that read codons beginning with adenine. Is involved in the transfer of the threonylcarbamoyl moiety of threonylcarbamoyl-AMP (TC-AMP) to the N6 group of A37, together with TsaE and TsaB. TsaD likely plays a direct catalytic role in this reaction. In Kineococcus radiotolerans (strain ATCC BAA-149 / DSM 14245 / SRS30216), this protein is tRNA N6-adenosine threonylcarbamoyltransferase.